The primary structure comprises 305 residues: ATP synthase F(0) complex subunit B2, mitochondrial (305 aa).

Residues 1–22 (MSLSRCLPLGQNARVIIIPARL) constitute a mitochondrion transit peptide.

It belongs to the eukaryotic ATPase B chain family. In terms of assembly, subunit of the F-type ATPase which has 2 components, CF(1) - the catalytic core - and CF(0) - the membrane proton channel.

The protein localises to the mitochondrion. It localises to the mitochondrion inner membrane. Functionally, mitochondrial membrane ATP synthase (F(1)F(0) ATP synthase or Complex V) produces ATP from ADP in the presence of a proton gradient across the membrane which is generated by electron transport complexes of the respiratory chain. F-type ATPases consist of two structural domains, F(1) - containing the extramembraneous catalytic core, and F(0) - containing the membrane proton channel, linked together by a central stalk and a peripheral stalk. During catalysis, ATP synthesis in the catalytic domain of F(1) is coupled via a rotary mechanism of the central stalk subunits to proton translocation. Part of the complex F(0) domain and the peripheric stalk, which acts as a stator to hold the subunits of the catalytic subcomplexes relative to the rotary elements. Plays a role in somatic development. Does not play a role in germline development. The protein is ATP synthase F(0) complex subunit B2, mitochondrial of Caenorhabditis elegans.